A 79-amino-acid polypeptide reads, in one-letter code: U-actitoxin-Bgr3d (79 aa).

The signal sequence occupies residues 1 to 21 (MSYERLLCLVLVASFIAASVA). A propeptide spanning residues 22-38 (QHPGDAPRMEDDSSAIQ) is cleaved from the precursor. Cystine bridges form between cysteine 44/cysteine 76, cysteine 46/cysteine 69, and cysteine 59/cysteine 77.

The protein belongs to the sea anemone type 3 (BDS) potassium channel toxin family.

The protein localises to the secreted. It is found in the nematocyst. Potently and selectively inhibits voltage-gated potassium channels Kv11/KCNH/ERG. Acts as a gating-modifier toxin that shifts the voltage-dependence of ERG activation in the positive direction and suppresses its current amplitudes elicited by strong depolarizing pulses that maximally activate the channels. The chain is U-actitoxin-Bgr3d from Bunodosoma granuliferum (Red warty sea anemone).